A 348-amino-acid chain; its full sequence is Histidinol-phosphate aminotransferase (348 aa).

The segment at methionine 1–asparagine 31 is disordered. The span at glutamate 18–asparagine 31 shows a compositional bias: polar residues. At lysine 207 the chain carries N6-(pyridoxal phosphate)lysine.

Belongs to the class-II pyridoxal-phosphate-dependent aminotransferase family. Histidinol-phosphate aminotransferase subfamily. In terms of assembly, homodimer. Pyridoxal 5'-phosphate serves as cofactor.

The catalysed reaction is L-histidinol phosphate + 2-oxoglutarate = 3-(imidazol-4-yl)-2-oxopropyl phosphate + L-glutamate. The protein operates within amino-acid biosynthesis; L-histidine biosynthesis; L-histidine from 5-phospho-alpha-D-ribose 1-diphosphate: step 7/9. The polypeptide is Histidinol-phosphate aminotransferase (Microcystis aeruginosa (strain NIES-843 / IAM M-2473)).